The primary structure comprises 227 residues: 2,3-bisphosphoglycerate-dependent phosphoglycerate mutase (227 aa).

Substrate-binding positions include 8 to 15 (RHGKSVWN), 21 to 22 (TG), arginine 58, 110 to 113 (ERMY), lysine 121, 137 to 138 (RR), and 181 to 182 (GN). The Tele-phosphohistidine intermediate role is filled by histidine 9. Glutamate 110 functions as the Proton donor/acceptor in the catalytic mechanism.

The protein belongs to the phosphoglycerate mutase family. BPG-dependent PGAM subfamily.

The enzyme catalyses (2R)-2-phosphoglycerate = (2R)-3-phosphoglycerate. It participates in carbohydrate degradation; glycolysis; pyruvate from D-glyceraldehyde 3-phosphate: step 3/5. Functionally, catalyzes the interconversion of 2-phosphoglycerate and 3-phosphoglycerate. This chain is 2,3-bisphosphoglycerate-dependent phosphoglycerate mutase, found in Chlamydia felis (strain Fe/C-56) (Chlamydophila felis).